The sequence spans 460 residues: Argininosuccinate lyase (460 aa).

Belongs to the lyase 1 family. Argininosuccinate lyase subfamily.

The protein resides in the cytoplasm. The catalysed reaction is 2-(N(omega)-L-arginino)succinate = fumarate + L-arginine. It functions in the pathway amino-acid biosynthesis; L-arginine biosynthesis; L-arginine from L-ornithine and carbamoyl phosphate: step 3/3. The chain is Argininosuccinate lyase from Actinobacillus succinogenes (strain ATCC 55618 / DSM 22257 / CCUG 43843 / 130Z).